The sequence spans 296 residues: Homoserine kinase (296 aa).

84-94 (PLARGLGSSSS) contacts ATP.

This sequence belongs to the GHMP kinase family. Homoserine kinase subfamily.

The protein localises to the cytoplasm. It catalyses the reaction L-homoserine + ATP = O-phospho-L-homoserine + ADP + H(+). The protein operates within amino-acid biosynthesis; L-threonine biosynthesis; L-threonine from L-aspartate: step 4/5. In terms of biological role, catalyzes the ATP-dependent phosphorylation of L-homoserine to L-homoserine phosphate. The sequence is that of Homoserine kinase from Lactococcus lactis subsp. lactis (strain IL1403) (Streptococcus lactis).